A 433-amino-acid chain; its full sequence is FAD-dependent monooxygenase notI (433 aa).

FAD contacts are provided by E45 and R117. The active site involves R195. Residues D314 and A327 each contribute to the FAD site.

The protein belongs to the paxM FAD-dependent monooxygenase family. Requires FAD as cofactor.

Its pathway is alkaloid biosynthesis. FAD-dependent monooxygenase; part of the gene cluster that mediates the biosynthesis of notoamide, a fungal indole alkaloid that belongs to a family of natural products containing a characteristic bicyclo[2.2.2]diazaoctane core. The first step of notoamide biosynthesis involves coupling of L-proline and L-tryptophan by the bimodular NRPS notE, to produce cyclo-L-tryptophan-L-proline called brevianamide F. The reverse prenyltransferase notF then acts as a deoxybrevianamide E synthase and converts brevianamide F to deoxybrevianamide E via reverse prenylation at C-2 of the indole ring leading to the bicyclo[2.2.2]diazaoctane core. Deoxybrevianamide E is further hydroxylated at C-6 of the indole ring, likely catalyzed by the cytochrome P450 monooxygenase notG, to yield 6-hydroxy-deoxybrevianamide E. 6-hydroxy-deoxybrevianamide E is a specific substrate of the prenyltransferase notC for normal prenylation at C-7 to produce 6-hydroxy-7-prenyl-deoxybrevianamide, also called notoamide S. As the proposed pivotal branching point in notoamide biosynthesis, notoamide S can be diverted to notoamide E through an oxidative pyran ring closure putatively catalyzed by either notH cytochrome P450 monooxygenase or the notD FAD-linked oxidoreductase. This step would be followed by an indole 2,3-epoxidation-initiated pinacol-like rearrangement catalyzed by the notB FAD-dependent monooxygenase leading to the formation of notoamide C and notoamide D. On the other hand notoamide S is converted to notoamide T by notH (or notD), a bifunctional oxidase that also functions as the intramolecular Diels-Alderase responsible for generation of (+)-notoamide T. To generate antipodal (-)-notoaminide T, notH' (or notD') in Aspergillus versicolor is expected to catalyze a Diels-Alder reaction leading to the opposite stereochemistry. The remaining oxidoreductase notD (or notH) likely catalyzes the oxidative pyran ring formation to yield (+)-stephacidin A. The FAD-dependent monooxygenase notI is highly similar to notB and is predicted to catalyze a similar conversion from (+)-stephacidin A to (-)-notoamide B via the 2,3-epoxidation of (+)-stephacidin A followed by a pinacol-type rearrangement. Finally, it remains unclear which enzyme could be responsible for the final hydroxylation steps leading to notoamide A and sclerotiamide. This Aspergillus sp. (strain MF297-2) protein is FAD-dependent monooxygenase notI.